Consider the following 71-residue polypeptide: Large ribosomal subunit protein bL31 (71 aa).

Residues C16, C18, C37, and C40 each coordinate Zn(2+).

The protein belongs to the bacterial ribosomal protein bL31 family. Type A subfamily. In terms of assembly, part of the 50S ribosomal subunit. Requires Zn(2+) as cofactor.

In terms of biological role, binds the 23S rRNA. The protein is Large ribosomal subunit protein bL31 of Pseudoalteromonas translucida (strain TAC 125).